Consider the following 740-residue polypeptide: E3 ubiquitin-protein ligase DTX3L (740 aa).

A2 carries the N-acetylalanine modification. The residue at position 9 (S9) is a Phosphoserine. 3 disordered regions span residues 96–119, 195–231, and 524–551; these read NTRP…MHQH, SEQK…KAEQ, and HETP…SEAS. 2 stretches are compositionally biased toward polar residues: residues 98–111 and 195–205; these read RPQI…QAET and SEQKQQFSPSM. At S202 the chain carries Phosphoserine. Residues 206–218 are compositionally biased toward basic and acidic residues; sequence TERKPLSQQERDS. A phosphoserine mark is found at S221, S532, and S539. The RING-type zinc finger occupies 561–600; that stretch reads CVICMDTISNKKVLPKCKHEFCAPCINKAMSYKPICPTCQ.

The protein belongs to the Deltex family. As to quaternary structure, homodimer and heterodimer. Can heterodimerize with DTX1, enhancing its ubiquitin ligase activity in vitro. Interacts (via N-terminus) with ADP ribosyltransferase PARP9/BAL1 (via PARP catalytic domain) forming a stable complex; the interaction is required to activate PARP9 but is dispensable for DTX3L catalytic activity. Forms a complex with STAT1 and PARP9 independently of IFNB1 or IFNG-mediated STAT1 'Tyr-701' phosphorylation. Found in a complex with PARP9, STAT1 and H2BC9. Found in a complex with E3 ligase ITCH and ESCRT-0 components HGS and STAM. Interacts (via C-terminus) with ITCH; the interaction is increased upon CXCL12 stimulation and inhibits ITCH catalytic activity; the interaction is direct. Interacts with HGS and STAM; the interaction brings together HGS and STAM and promotes their recruitment to early endosomes. In terms of assembly, (Microbial infection) Interacts with encephalomyocarditis virus (EMCV) C3 protease; the interaction results in C3 protease 'Lys-48'-linked ubiquitination. (Microbial infection) Interacts with human rhinovirus (HRV) C3 protease; the interaction results in C3 protease 'Lys-48'-linked ubiquitination. Post-translationally, autoubiquitinated.

The protein resides in the cytoplasm. The protein localises to the nucleus. It is found in the early endosome membrane. It localises to the lysosome membrane. It catalyses the reaction S-ubiquitinyl-[E2 ubiquitin-conjugating enzyme]-L-cysteine + [acceptor protein]-L-lysine = [E2 ubiquitin-conjugating enzyme]-L-cysteine + N(6)-ubiquitinyl-[acceptor protein]-L-lysine.. The protein operates within protein modification; protein ubiquitination. With respect to regulation, binding to PARP9 enhances DTX3L catalytic activity. In terms of biological role, E3 ubiquitin-protein ligase which, in association with ADP-ribosyltransferase PARP9, plays a role in DNA damage repair and in interferon-mediated antiviral responses. Monoubiquitinates several histones, including histone H2A, H2B, H3 and H4. In response to DNA damage, mediates monoubiquitination of 'Lys-91' of histone H4 (H4K91ub1). The exact role of H4K91ub1 in DNA damage response is still unclear but it may function as a licensing signal for additional histone H4 post-translational modifications such as H4 'Lys-20' methylation (H4K20me). PARP1-dependent PARP9-DTX3L-mediated ubiquitination promotes the rapid and specific recruitment of 53BP1/TP53BP1, UIMC1/RAP80, and BRCA1 to DNA damage sites. By monoubiquitinating histone H2B H2BC9/H2BJ and thereby promoting chromatin remodeling, positively regulates STAT1-dependent interferon-stimulated gene transcription and thus STAT1-mediated control of viral replication. Independently of its catalytic activity, promotes the sorting of chemokine receptor CXCR4 from early endosome to lysosome following CXCL12 stimulation by reducing E3 ligase ITCH activity and thus ITCH-mediated ubiquitination of endosomal sorting complex required for transport ESCRT-0 components HGS and STAM. In addition, required for the recruitment of HGS and STAM to early endosomes. In association with PARP9, plays a role in antiviral responses by mediating 'Lys-48'-linked ubiquitination of encephalomyocarditis virus (EMCV) and human rhinovirus (HRV) C3 proteases and thus promoting their proteasomal-mediated degradation. The protein is E3 ubiquitin-protein ligase DTX3L (DTX3L) of Homo sapiens (Human).